The following is a 209-amino-acid chain: Large ribosomal subunit protein uL3 (209 aa).

Glutamine 150 carries the post-translational modification N5-methylglutamine.

The protein belongs to the universal ribosomal protein uL3 family. Part of the 50S ribosomal subunit. Forms a cluster with proteins L14 and L19. Methylated by PrmB.

Its function is as follows. One of the primary rRNA binding proteins, it binds directly near the 3'-end of the 23S rRNA, where it nucleates assembly of the 50S subunit. This chain is Large ribosomal subunit protein uL3, found in Aliivibrio fischeri (strain MJ11) (Vibrio fischeri).